A 182-amino-acid polypeptide reads, in one-letter code: UPF0316 protein BCG9842_B1857 (182 aa).

Transmembrane regions (helical) follow at residues 6–26 (LIFV…ILLV), 32–52 (SAAG…GIVF), and 58–78 (WMNI…GGYI).

Belongs to the UPF0316 family.

The protein resides in the cell membrane. This chain is UPF0316 protein BCG9842_B1857, found in Bacillus cereus (strain G9842).